Here is a 167-residue protein sequence, read N- to C-terminus: Transcription factor E (167 aa).

An HTH TFE/IIEalpha-type domain is found at 8–90; sequence NDKVIRGYLI…LWHLDFSDVE (83 aa).

This sequence belongs to the TFE family. Monomer. Interaction with RNA polymerase subunits RpoF and RpoE is necessary for Tfe stimulatory transcription activity. Able to interact with Tbp and RNA polymerase in the absence of DNA promoter. Interacts both with the preinitiation and elongation complexes.

In terms of biological role, transcription factor that plays a role in the activation of archaeal genes transcribed by RNA polymerase. Facilitates transcription initiation by enhancing TATA-box recognition by TATA-box-binding protein (Tbp), and transcription factor B (Tfb) and RNA polymerase recruitment. Not absolutely required for transcription in vitro, but particularly important in cases where Tbp or Tfb function is not optimal. It dynamically alters the nucleic acid-binding properties of RNA polymerases by stabilizing the initiation complex and destabilizing elongation complexes. Seems to translocate with the RNA polymerase following initiation and acts by binding to the non template strand of the transcription bubble in elongation complexes. In Methanosarcina acetivorans (strain ATCC 35395 / DSM 2834 / JCM 12185 / C2A), this protein is Transcription factor E.